A 20-amino-acid chain; its full sequence is Agglutinin beta-2 chain (20 aa).

Residues 1–20 form a disordered region; it reads GRNGKSQSIIVGPWGDRVTN.

It belongs to the jacalin lectin family. Formed of four alpha chains and four beta chains.

Functionally, D-galactose-specific lectin, binds the T-antigen structure Gal-beta1,3-GalNAc. The sequence is that of Agglutinin beta-2 chain from Maclura pomifera (Osage orange).